The primary structure comprises 212 residues: MTDLSDIRREYAKGGLRRADLPQNPMDLFALWMTQARDAELSDPTAMCVATVDEQGQPFQRIVLLKRFDDTGFVFFTNLGSRKAQQIAANNKVSLHFPWHPLERQVSVLGEAQALSTTEVLKYFMTRPKDSQIAAWVSQQSSKLSARQVLEGKFFEMKAKFAKGDVPLPSFWGGYLVRPKSIEFWQGGEHRLHDRFIYTLDNTQWIIDRLAP.

Residues 8–11 (RREY) and K66 each bind substrate. FMN is bound by residues 61–66 (RIVLLK), 76–77 (FT), R82, K83, and Q105. Y123, R127, and S131 together coordinate substrate. FMN is bound by residues 140–141 (QS) and W185. Substrate is bound at residue 191 to 193 (RLH). R195 provides a ligand contact to FMN.

This sequence belongs to the pyridoxamine 5'-phosphate oxidase family. As to quaternary structure, homodimer. FMN is required as a cofactor.

It catalyses the reaction pyridoxamine 5'-phosphate + O2 + H2O = pyridoxal 5'-phosphate + H2O2 + NH4(+). The enzyme catalyses pyridoxine 5'-phosphate + O2 = pyridoxal 5'-phosphate + H2O2. It functions in the pathway cofactor metabolism; pyridoxal 5'-phosphate salvage; pyridoxal 5'-phosphate from pyridoxamine 5'-phosphate: step 1/1. The protein operates within cofactor metabolism; pyridoxal 5'-phosphate salvage; pyridoxal 5'-phosphate from pyridoxine 5'-phosphate: step 1/1. Catalyzes the oxidation of either pyridoxine 5'-phosphate (PNP) or pyridoxamine 5'-phosphate (PMP) into pyridoxal 5'-phosphate (PLP). This Shewanella putrefaciens (strain CN-32 / ATCC BAA-453) protein is Pyridoxine/pyridoxamine 5'-phosphate oxidase.